Consider the following 128-residue polypeptide: DNA polymerase epsilon subunit 3 (128 aa).

The segment covering 98–110 (EKKESKASKKDSN) has biased composition (basic and acidic residues). The tract at residues 98–128 (EKKESKASKKDSNTAENANASATATAEEAPE) is disordered. Residues 111–128 (TAENANASATATAEEAPE) are compositionally biased toward low complexity.

Homodimer. Component of the DNA polymerase epsilon complex consisting of four subunits: the catalytic subunit PolE1/DNApol-epsilon255 and the accessory subunits PolE2/DNApol-epsilon58, Chrac-14/DNApolE3 and PolE4. Component of the chromatin accessibility complex (CHRAC), composed of Chrac-14, Chrac-16, Acf and Iswi. Forms an heterodimer with Chrac-16. The Chrac-14/Chrac-16 heterodimer interacts with Acf (via N-terminus). Interacts directly with Iswi and this interaction is further stabilized by association with Chrac-16. Component of the Ada2a-containing (ATAC) complex composed of at least Ada2a, Atac1, Hcf, Ada3, Gcn5, Mocs2B, Charac-14, Atac3, Atac2, NC2beta and wds. Interacts with cid.

The protein localises to the nucleus. In terms of biological role, accessory component of the DNA polymerase epsilon complex. Participates in DNA repair and in chromosomal DNA replication. Histone-like protein which promotes nucleosome sliding of ATP-dependent nucleosome remodeling complexes. Part of the chromatin-accessibility complex (CHRAC) which uses energy/ATP to increase the general accessibility of DNA in chromatin. As a heterodimer with Chrac-16, binds DNA and facilitates nucleosome sliding by Acf. Has a role in DNA damage response by preventing cid mislocalization to chromatin. The sequence is that of DNA polymerase epsilon subunit 3 from Drosophila melanogaster (Fruit fly).